Here is a 159-residue protein sequence, read N- to C-terminus: Ribosomal RNA large subunit methyltransferase H (159 aa).

S-adenosyl-L-methionine-binding positions include L76, G108, and 127 to 132; that span reads FSHMTF.

It belongs to the RNA methyltransferase RlmH family. Homodimer.

It localises to the cytoplasm. It catalyses the reaction pseudouridine(1915) in 23S rRNA + S-adenosyl-L-methionine = N(3)-methylpseudouridine(1915) in 23S rRNA + S-adenosyl-L-homocysteine + H(+). Specifically methylates the pseudouridine at position 1915 (m3Psi1915) in 23S rRNA. This is Ribosomal RNA large subunit methyltransferase H from Halothermothrix orenii (strain H 168 / OCM 544 / DSM 9562).